A 1148-amino-acid polypeptide reads, in one-letter code: Zinc finger CCCH domain-containing protein 18 (1148 aa).

Low complexity predominate over residues 1–13 (MDTPESPTQSPQS). Disordered regions lie at residues 1 to 315 (MDTP…PMDR), 380 to 417 (DPFS…LPPP), and 521 to 1127 (YTET…REEL). Composition is skewed to basic and acidic residues over residues 53 to 73 (VPEH…AGRE) and 82 to 96 (EDYK…DIHQ). Composition is skewed to acidic residues over residues 144–156 (ERGD…EEDE) and 167–176 (ELEEEEDEEE). Over residues 190 to 202 (DLKDESSVSRDLD) the composition is skewed to basic and acidic residues. Acidic residues-rich tracts occupy residues 203–214 (EHELDYDEEVPE) and 233–245 (EDGE…DEEE). The span at 261–289 (DNRDTPLRKSEDSREGGRRDSFRDKKKEE) shows a compositional bias: basic and acidic residues. The span at 290-306 (DDGEIDEGEIDDDDLEE) shows a compositional bias: acidic residues. Residues 388-397 (PPGGAAGGGP) are compositionally biased toward gly residues. Positions 530–615 (PDRERERDPR…EKKDEKEKTL (86 aa)) are enriched in basic and acidic residues. Residues 543-584 (RERERERERDHRERERRQREREREREREREKDSRRRKDEWDR) adopt a coiled-coil conformation. Residues 622–631 (NMPPRGPMEP) are compositionally biased toward pro residues. Basic and acidic residues predominate over residues 632 to 646 (PTKKDMLSVTKRPDE). Residue serine 666 is modified to Phosphoserine. Low complexity predominate over residues 677 to 740 (SGSSVSLSNS…SRSGSFSSSP (64 aa)). Pro residues-rich tracts occupy residues 783–800 (KVMP…PPKP) and 807–817 (PPNPRPPGRPP). Basic and acidic residues predominate over residues 818–833 (GPREPREPPNMREGRK). Low complexity-rich tracts occupy residues 847 to 875 (VSGS…ASRS), 882 to 903 (SLSV…SVRS), and 914 to 925 (ASPVSSASSRSP). 2 stretches are compositionally biased toward basic and acidic residues: residues 933–964 (DRGP…KRVD) and 1012–1029 (QTDR…KERP). Serine 1056 carries the phosphoserine modification. Composition is skewed to low complexity over residues 1083–1098 (PAKS…SAAK) and 1107–1119 (GSAS…KPSS). The stretch at 1118–1146 (SSTLSRREELLKQLKAVEDAIARKRAKIP) forms a coiled coil.

Its subcellular location is the nucleus. The sequence is that of Zinc finger CCCH domain-containing protein 18 (zc3h18) from Danio rerio (Zebrafish).